The following is a 104-amino-acid chain: L-rhamnose mutarotase (104 aa).

Tyrosine 18 contributes to the substrate binding site. Histidine 22 (proton donor) is an active-site residue. Substrate is bound by residues tyrosine 41 and 76-77 (WW).

Belongs to the rhamnose mutarotase family. Homodimer.

It localises to the cytoplasm. The enzyme catalyses alpha-L-rhamnose = beta-L-rhamnose. It functions in the pathway carbohydrate metabolism; L-rhamnose metabolism. Its function is as follows. Involved in the anomeric conversion of L-rhamnose. This chain is L-rhamnose mutarotase, found in Shigella sonnei (strain Ss046).